Reading from the N-terminus, the 455-residue chain is SUN domain-containing protein 2 (455 aa).

Residues M1–P12 are compositionally biased toward polar residues. The segment at M1–I99 is disordered. An N-acetylserine modification is found at S2. Over S2 to K105 the chain is Nuclear. Phosphoserine is present on S63. The span at K74 to Q88 shows a compositional bias: low complexity. The short motif at Q88–Q95 is the Nuclear localization signal element. The helical transmembrane segment at T106–I128 threads the bilayer. Topologically, residues R129 to A455 are perinuclear space. Positions L201–K225 form a coiled coil. The 163-residue stretch at G285–L447 folds into the SUN domain.

Forms homomers (e.g. dimers, trimers and tetramers) and heteromers with SUN1. Interacts with SUN3, SUN4 and TIK. Core component of the LINC complex which is composed of inner nuclear membrane SUN domain-containing proteins coupled to outer nuclear membrane WIP and WIT proteins. The LINC complex also involves nucleoskeletal proteins CRWN/LINC and possibly KAKU4 and the cytoskeletal myosin KAKU1. Interacts with LINC1, WIP1, WIP2 and WIP3 at the nuclear envelope (NE). Interacts with SINE1, SINE2, SINE3 and SINE4. Interacts with NEAP1, NEA2 and NEAP3. Expressed in roots, hypocotyls, cotyledons and leaves and inflorescences.

It is found in the nucleus inner membrane. It localises to the cytoplasm. The protein localises to the cytoskeleton. Its subcellular location is the phragmoplast. The protein resides in the endoplasmic reticulum membrane. It is found in the nucleus envelope. In terms of biological role, component of SUN-protein-containing multivariate complexes also called LINC complexes which link the nucleoskeleton and cytoskeleton by providing versatile outer nuclear membrane attachment sites for cytoskeletal filaments. Required for the maintenance and/or formation of polarized nuclear shape in root hairs. Modulates the anchoring and mobility of WIP proteins in the nuclear envelope (NE). In association with SUN1, may be involved in telomere attachment to nuclear envelope in the prophase of meiosis. As component of the SUN-WIP-WIT2-KAKU1 complex, mediates the transfer of cytoplasmic forces to the nuclear envelope (NE), leading to nuclear shape changes. This chain is SUN domain-containing protein 2, found in Arabidopsis thaliana (Mouse-ear cress).